Reading from the N-terminus, the 541-residue chain is Glutamyl-tRNA(Gln) amidotransferase subunit A, chloroplastic/mitochondrial (541 aa).

Residues Lys121 and Ser196 each act as charge relay system in the active site. Ser220 functions as the Acyl-ester intermediate in the catalytic mechanism.

It belongs to the amidase family. GatA subfamily. In terms of assembly, subunit of the heterotrimeric GatCAB amidotransferase (AdT) complex, composed of A, B and C subunits.

Its subcellular location is the mitochondrion. The protein localises to the plastid. It localises to the chloroplast stroma. The enzyme catalyses L-glutamyl-tRNA(Gln) + L-glutamine + ATP + H2O = L-glutaminyl-tRNA(Gln) + L-glutamate + ADP + phosphate + H(+). In terms of biological role, allows the formation of correctly charged Gln-tRNA(Gln) through the transamidation of misacylated Glu-tRNA(Gln) in chloroplasts and mitochondria. The reaction takes place in the presence of glutamine and ATP through an activated gamma-phospho-Glu-tRNA(Gln). The polypeptide is Glutamyl-tRNA(Gln) amidotransferase subunit A, chloroplastic/mitochondrial (Sorghum bicolor (Sorghum)).